The following is a 902-amino-acid chain: Probable polyribonucleotide nucleotidyltransferase 1, chloroplastic (902 aa).

The transit peptide at 1–66 (MLATPGALHH…RRRAAGARVR (66 aa)) directs the protein to the chloroplast. Residues 44–53 (VAASASTSRR) are compositionally biased toward low complexity. The interval 44-93 (VAASASTSRRGGARRRAAGARVRASVGEEAPPVVTEEASTSGGPTKFSTK) is disordered. Polar residues predominate over residues 80-91 (EASTSGGPTKFS). In terms of domain architecture, KH spans 693–753 (PLIHVMKVKP…SSLEKSKAII (61 aa)). The 70-residue stretch at 763 to 832 (GEIYRNCEIK…DKGQLRLSSR (70 aa)) folds into the S1 motif domain. The interval 833 to 902 (ALLPDANQES…ASQGSEMGTE (70 aa)) is disordered. Polar residues predominate over residues 839-850 (NQESSSKQQAGG). Positions 852-862 (TREKAPQKDNL) are enriched in basic and acidic residues. Positions 877–888 (EASTAENNATAS) are enriched in low complexity.

This sequence belongs to the polyribonucleotide nucleotidyltransferase family.

The protein resides in the plastid. It is found in the chloroplast. The enzyme catalyses RNA(n+1) + phosphate = RNA(n) + a ribonucleoside 5'-diphosphate. Its function is as follows. Involved in the metabolism of all major classes of plastid RNAs. Required for efficient 3'-end processing of mRNAs and 3'-end maturation of rRNA transcripts, but is not sufficient to mediate their degradation. Mediates tRNA degradation. May function as a poly(A) mRNA 3'-5' degrading phosphorylase. The chain is Probable polyribonucleotide nucleotidyltransferase 1, chloroplastic (PNP1) from Oryza sativa subsp. japonica (Rice).